Reading from the N-terminus, the 660-residue chain is Glycogen debranching enzyme (660 aa).

Asp-338 (nucleophile) is an active-site residue. Glu-373 acts as the Proton donor in catalysis. The span at 460 to 472 (NEANGEDNRDGAW) shows a compositional bias: basic and acidic residues. Residues 460–482 (NEANGEDNRDGAWENHSNNHGYE) form a disordered region.

It belongs to the glycosyl hydrolase 13 family.

The enzyme catalyses Hydrolysis of (1-&gt;6)-alpha-D-glucosidic linkages to branches with degrees of polymerization of three or four glucose residues in limit dextrin.. It participates in glycan degradation; glycogen degradation. Its function is as follows. Removes maltotriose and maltotetraose chains that are attached by 1,6-alpha-linkage to the limit dextrin main chain, generating a debranched limit dextrin. The polypeptide is Glycogen debranching enzyme (Cronobacter sakazakii (strain ATCC BAA-894) (Enterobacter sakazakii)).